The following is a 574-amino-acid chain: Sulfate adenylyltransferase (574 aa).

Residues 1–169 (MANPPHGGVL…IEAINKLNHY (169 aa)) form an N-terminal region. Residues 170–394 (DYVALRYTPA…LRESSPPRHT (225 aa)) form a catalytic region. Gln197 serves as a coordination point for sulfate. Residues 197 to 200 (QTRN) and 291 to 294 (GRDH) contribute to the ATP site. Active-site residues include Thr198, Arg199, and Asn200. Arg199 is a sulfate binding site. Ala295 contacts sulfate. ATP is bound at residue Val333. An allosteric regulation domain; adenylyl-sulfate kinase-like region spans residues 395–574 (QGFTIFLTGY…LETEGFFDRS (180 aa)). 3'-phosphoadenylyl sulfate-binding positions include 434 to 437 (DTVR), Arg451, 477 to 478 (IA), and Arg516.

The protein in the N-terminal section; belongs to the sulfate adenylyltransferase family. It in the C-terminal section; belongs to the APS kinase family. As to quaternary structure, homohexamer. Dimer of trimers.

It is found in the cytoplasm. It carries out the reaction sulfate + ATP + H(+) = adenosine 5'-phosphosulfate + diphosphate. It functions in the pathway sulfur metabolism; hydrogen sulfide biosynthesis; sulfite from sulfate: step 1/3. Its activity is regulated as follows. Allosterically inhibited by 3'-phosphoadenosine 5'-phosphosulfate (PAPS). Catalyzes the first intracellular reaction of sulfate assimilation, forming adenosine-5'-phosphosulfate (APS) from inorganic sulfate and ATP. Plays an important role in sulfate activation as a component of the biosynthesis pathway of sulfur-containing amino acids. This Neosartorya fischeri (strain ATCC 1020 / DSM 3700 / CBS 544.65 / FGSC A1164 / JCM 1740 / NRRL 181 / WB 181) (Aspergillus fischerianus) protein is Sulfate adenylyltransferase.